A 130-amino-acid polypeptide reads, in one-letter code: Small ribosomal subunit protein uS9 (130 aa).

Residues 109–130 (RMKERKKYGLKGARRAPQFSKR) form a disordered region. Over residues 111–130 (KERKKYGLKGARRAPQFSKR) the composition is skewed to basic residues.

The protein belongs to the universal ribosomal protein uS9 family.

In Alkaliphilus metalliredigens (strain QYMF), this protein is Small ribosomal subunit protein uS9.